The sequence spans 246 residues: Probable transcriptional regulatory protein KPK_1906 (246 aa).

Belongs to the TACO1 family.

It is found in the cytoplasm. This chain is Probable transcriptional regulatory protein KPK_1906, found in Klebsiella pneumoniae (strain 342).